The sequence spans 496 residues: ATP synthase subunit beta (496 aa).

Position 155-162 (155-162) interacts with ATP; sequence GGAGVGKT.

The protein belongs to the ATPase alpha/beta chains family. In terms of assembly, F-type ATPases have 2 components, CF(1) - the catalytic core - and CF(0) - the membrane proton channel. CF(1) has five subunits: alpha(3), beta(3), gamma(1), delta(1), epsilon(1). CF(0) has three main subunits: a(1), b(2) and c(9-12). The alpha and beta chains form an alternating ring which encloses part of the gamma chain. CF(1) is attached to CF(0) by a central stalk formed by the gamma and epsilon chains, while a peripheral stalk is formed by the delta and b chains.

The protein resides in the cell membrane. It carries out the reaction ATP + H2O + 4 H(+)(in) = ADP + phosphate + 5 H(+)(out). Functionally, produces ATP from ADP in the presence of a proton gradient across the membrane. The catalytic sites are hosted primarily by the beta subunits. The chain is ATP synthase subunit beta from Karelsulcia muelleri (strain GWSS) (Sulcia muelleri).